We begin with the raw amino-acid sequence, 69 residues long: Large ribosomal subunit protein uL29 (69 aa).

This sequence belongs to the universal ribosomal protein uL29 family.

The polypeptide is Large ribosomal subunit protein uL29 (Carboxydothermus hydrogenoformans (strain ATCC BAA-161 / DSM 6008 / Z-2901)).